Consider the following 179-residue polypeptide: Large ribosomal subunit protein uL5 (179 aa).

This sequence belongs to the universal ribosomal protein uL5 family. Part of the 50S ribosomal subunit; part of the 5S rRNA/L5/L18/L25 subcomplex. Contacts the 5S rRNA and the P site tRNA. Forms a bridge to the 30S subunit in the 70S ribosome.

In terms of biological role, this is one of the proteins that bind and probably mediate the attachment of the 5S RNA into the large ribosomal subunit, where it forms part of the central protuberance. In the 70S ribosome it contacts protein S13 of the 30S subunit (bridge B1b), connecting the 2 subunits; this bridge is implicated in subunit movement. Contacts the P site tRNA; the 5S rRNA and some of its associated proteins might help stabilize positioning of ribosome-bound tRNAs. This Prochlorococcus marinus (strain MIT 9301) protein is Large ribosomal subunit protein uL5.